The sequence spans 1163 residues: Protein phosphatase 1 regulatory subunit 26 (1163 aa).

Residues 65 to 83 (HERLTQRGQRAERSRDTRL) are compositionally biased toward basic and acidic residues. Disordered stretches follow at residues 65–91 (HERLTQRGQRAERSRDTRLAPKPAVCK), 144–253 (RGGA…TSAR), 266–393 (RKPP…KKKL), 463–496 (APMEGSDRPPSRNPLFCPQPMPPRSEGDSSNIDS), 514–653 (VGSP…DEDL), 672–929 (RDPR…TATA), and 1073–1163 (TQPG…GLKL). Composition is skewed to polar residues over residues 163-179 (HSSTLPIPCPSQLTPGS) and 189-201 (DQGSTSPASMSSE). Residues 208-236 (IRAEIEQFLNEKRQHENPKCDGFVDKKSD) are compositionally biased toward basic and acidic residues. Positions 273-297 (KMSTQQRNFQPKPTTEPETPVSTKL) are enriched in polar residues. The span at 315 to 324 (MPARRSKRIR) shows a compositional bias: basic residues. The span at 515 to 535 (GSPQPAQGPLSSPGPSGQPGI) shows a compositional bias: low complexity. Composition is skewed to basic and acidic residues over residues 566–581 (KIREGRESTQDADHIQ) and 634–645 (ATEKESSEDKSS). Residues 672-682 (RDPRASCKKVR) are compositionally biased toward basic residues. The span at 766–780 (TGASGHPPSASSPTS) shows a compositional bias: low complexity. Positions 783 to 792 (SAVDSDDSIE) are enriched in acidic residues. 2 stretches are compositionally biased toward basic and acidic residues: residues 793–808 (LEIRRFLAEKAKESIR) and 850–859 (EGRRGPERAR). Residues 860–871 (TQATGLLSQSGK) show a composition bias toward polar residues. The span at 901–910 (SSAKASPPSR) shows a compositional bias: low complexity. A compositionally biased stretch (basic and acidic residues) spans 1105-1131 (QQDRRNSASEDKVLDLRYRHRVDREPQ). The residue at position 1111 (S1111) is a Phosphoserine. 2 stretches are compositionally biased toward polar residues: residues 1133 to 1146 (QETLGSDASEFSDT) and 1154 to 1163 (ATVSSKGLKL).

Interacts with UTP20 and PPP1CA.

The protein resides in the nucleus. It localises to the nucleolus. Inhibits phosphatase activity of protein phosphatase 1 (PP1) complexes. May positively regulate cell proliferation. This chain is Protein phosphatase 1 regulatory subunit 26 (Ppp1r26), found in Mus musculus (Mouse).